We begin with the raw amino-acid sequence, 1651 residues long: Alsin (1651 aa).

RCC1 repeat units follow at residues 59–108 (DGEV…AVTE), 109–167 (SGVV…ALSI), and 169–218 (REIW…ALVQ). Positions 444-476 (REEQVKQESLQGKKSSSLMDIREEESEGGSRRL) are disordered. Over residues 450-461 (QESLQGKKSSSL) the composition is skewed to polar residues. 4 positions are modified to phosphoserine: S459, S460, S477, and S486. T504 bears the Phosphothreonine mark. RCC1 repeat units lie at residues 519 to 570 (RTEV…ALTA) and 572 to 621 (SQVY…FLVD). At K527 the chain carries N6-acetyllysine. Positions 684 to 879 (GYIASLHELA…ESLALHLGKK (196 aa)) constitute a DH domain. A PH domain is found at 895-1001 (GKMTDSLRKP…RAISQAVDQA (107 aa)). MORN repeat units follow at residues 1043–1065 (YDGRWLSGKPHGRGVLKWPDGKV), 1066–1088 (YSGTFRNGLEDGYGEYRIPNKAL), 1094–1116 (YVGHWKEGKMCGQGVYSYASGEV), 1117–1139 (FEGCFQDNMRHGHGLLRSGKLTS), 1145–1167 (FIGQWVMDKKAGYGVFDDITRGE), 1169–1191 (YMGMWQDDACQGNGVVVTQFGLY), 1192–1214 (YEGNFHLNKMMGNGVLLSEDDTI), and 1215–1238 (YEGEFSDDWTLCGKGTLTMPNGDY). Position 1329 is a phosphoserine (S1329). In terms of domain architecture, VPS9 spans 1507–1651 (KQPDIALLGF…YYQIQREKLN (145 aa)).

In terms of assembly, forms a heteromeric complex with ALS2CL. Interacts with ALS2CL.

Functionally, may act as a GTPase regulator. Controls survival and growth of spinal motoneurons. This chain is Alsin (Als2), found in Rattus norvegicus (Rat).